The following is a 140-amino-acid chain: Small ribosomal subunit protein uS19 (140 aa).

Belongs to the universal ribosomal protein uS19 family.

Protein S19 forms a complex with S13 that binds strongly to the 16S ribosomal RNA. In Metallosphaera sedula (strain ATCC 51363 / DSM 5348 / JCM 9185 / NBRC 15509 / TH2), this protein is Small ribosomal subunit protein uS19.